A 321-amino-acid polypeptide reads, in one-letter code: Ribosomal RNA small subunit methyltransferase H (321 aa).

S-adenosyl-L-methionine contacts are provided by residues 33 to 35 (AGH), Asp58, Phe85, Asp111, and Gln118.

This sequence belongs to the methyltransferase superfamily. RsmH family.

Its subcellular location is the cytoplasm. The enzyme catalyses cytidine(1402) in 16S rRNA + S-adenosyl-L-methionine = N(4)-methylcytidine(1402) in 16S rRNA + S-adenosyl-L-homocysteine + H(+). Specifically methylates the N4 position of cytidine in position 1402 (C1402) of 16S rRNA. The chain is Ribosomal RNA small subunit methyltransferase H from Chloroherpeton thalassium (strain ATCC 35110 / GB-78).